We begin with the raw amino-acid sequence, 412 residues long: Kelch repeat-containing protein At1g19470 (412 aa).

The tract at residues 1–55 (MVNISEIPDDSNDGCDPNKKPEEQVLRRSRRIATRNENQNKKPKEEEEEDNRSVS) is disordered. Residues 16-26 (DPNKKPEEQVL) show a composition bias toward basic and acidic residues. 4 Kelch repeats span residues 156–202 (EMYV…VVDG), 203–250 (KIYV…SAHA), 255–291 (KLYMLGSKFCLVYEPKRNGEWDASVGATPLKDLWDKT), and 292–345 (CCVV…EMAN).

This Arabidopsis thaliana (Mouse-ear cress) protein is Kelch repeat-containing protein At1g19470.